A 301-amino-acid chain; its full sequence is Asialoglycoprotein receptor 2 (301 aa).

The interval 1–43 is disordered; that stretch reads MEKDCQDIQQLDSEENDHQLSGDDEHGSHVQDPRIENPHWKGQ. The Cytoplasmic segment spans residues 1 to 58; sequence MEKDCQDIQQLDSEENDHQLSGDDEHGSHVQDPRIENPHWKGQPLSRPFPQRLCSTFR. Serine 13 carries the post-translational modification Phosphoserine. Basic and acidic residues predominate over residues 16-39; that stretch reads NDHQLSGDDEHGSHVQDPRIENPH. A lipid anchor (S-palmitoyl cysteine) is attached at cysteine 54. Residues 59 to 79 form a helical; Signal-anchor for type II membrane protein membrane-spanning segment; it reads LSLLALAFNILLLVVICVVSS. Topologically, residues 80–301 are extracellular; that stretch reads QSIQLQEEFR…VCEKRRNITH (222 aa). N-linked (GlcNAc...) asparagine glycosylation is found at asparagine 97 and asparagine 165. One can recognise a C-type lectin domain in the interval 169–295; that stretch reads CCPVNWVEFG…QQVNRWVCEK (127 aa). 3 disulfides stabilise this stretch: cysteine 170/cysteine 181, cysteine 198/cysteine 293, and cysteine 271/cysteine 285. N-linked (GlcNAc...) asparagine glycosylation occurs at asparagine 298.

Interacts with LASS2. As to expression, expressed exclusively in hepatic parenchymal cells.

It localises to the membrane. Mediates the endocytosis of plasma glycoproteins to which the terminal sialic acid residue on their complex carbohydrate moieties has been removed. The receptor recognizes terminal galactose and N-acetylgalactosamine units. After ligand binding to the receptor, the resulting complex is internalized and transported to a sorting organelle, where receptor and ligand are disassociated. The receptor then returns to the cell membrane surface. This is Asialoglycoprotein receptor 2 (Asgr2) from Mus musculus (Mouse).